The following is a 383-amino-acid chain: Acetylornithine deacetylase (383 aa).

A Zn(2+)-binding site is contributed by His80. The active site involves Asp82. Position 112 (Asp112) interacts with Zn(2+). The active site involves Glu144. Positions 145, 169, and 355 each coordinate Zn(2+).

This sequence belongs to the peptidase M20A family. ArgE subfamily. In terms of assembly, homodimer. It depends on Zn(2+) as a cofactor. Co(2+) is required as a cofactor. Requires glutathione as cofactor.

It localises to the cytoplasm. The catalysed reaction is N(2)-acetyl-L-ornithine + H2O = L-ornithine + acetate. The protein operates within amino-acid biosynthesis; L-arginine biosynthesis; L-ornithine from N(2)-acetyl-L-ornithine (linear): step 1/1. Its function is as follows. Catalyzes the hydrolysis of the amide bond of N(2)-acetylated L-amino acids. Cleaves the acetyl group from N-acetyl-L-ornithine to form L-ornithine, an intermediate in L-arginine biosynthesis pathway, and a branchpoint in the synthesis of polyamines. The protein is Acetylornithine deacetylase of Salmonella typhimurium (strain LT2 / SGSC1412 / ATCC 700720).